The primary structure comprises 89 residues: Acyl-CoA-binding protein (89 aa).

The 86-residue stretch at leucine 3–serine 88 folds into the ACB domain. Residues tyrosine 30 to lysine 34, lysine 56, and tyrosine 75 contribute to the an acyl-CoA site.

Belongs to the ACBP family.

In terms of biological role, binds medium- and long-chain acyl-CoA esters with very high affinity and may function as an intracellular carrier of acyl-CoA esters. This Gossypium hirsutum (Upland cotton) protein is Acyl-CoA-binding protein.